A 440-amino-acid chain; its full sequence is C4-dicarboxylate transport protein (440 aa).

The next 9 membrane-spanning stretches (helical) occupy residues 7-29 (LYKSLYVQVLVAITIGILLGHYY), 49-66 (MVIAPIIFCTVVSGIAGM), 79-101 (ALLYFEIVSTIALIIGLVVVNVV), 143-165 (VVGAFANGDILQVLMFSVLFGFA), 186-208 (VMFNIINMIMKLAPIGAFGAMAF), 221-243 (LGYLMACFYITCLLFVLVVLGGI), 291-313 (VVGLVIPTGYSFNLDGTSIYLTM), 328-350 (ITHQITLLLVLLVASKGAAGVTG), and 355-377 (VLAATLSAVGHLPVAGLALILGI). A disordered region spans residues 419-440 (GGAPLIDTRPTDDLGVAEGPAR).

Belongs to the dicarboxylate/amino acid:cation symporter (DAACS) (TC 2.A.23) family.

Its subcellular location is the cell inner membrane. In terms of biological role, responsible for the transport of dicarboxylates such as succinate, fumarate, and malate from the periplasm across the membrane. This Pseudomonas putida (strain ATCC 47054 / DSM 6125 / CFBP 8728 / NCIMB 11950 / KT2440) protein is C4-dicarboxylate transport protein.